Reading from the N-terminus, the 414-residue chain is Arrestin domain-containing protein 3 (414 aa).

2 short sequence motifs (PPxY motif) span residues Pro346–Tyr349 and Pro391–Tyr394. Positions Leu393 to Arg414 are disordered. Residues Ser405 to Arg414 show a composition bias toward basic and acidic residues.

Belongs to the arrestin family. In terms of assembly, interacts (via PPxY motifs) with NEDD4 (via WW domains). Interacts with ADRB2. Interacts with ADRB3. Interacts with HGS (via PPxY motifs). Does not bind TXN (thioredoxin). Interacts with ITCH.

It is found in the cytoplasm. The protein resides in the cell membrane. The protein localises to the lysosome. It localises to the endosome. Its subcellular location is the early endosome. In terms of biological role, adapter protein that plays a role in regulating cell-surface expression of adrenergic receptors and probably also other G protein-coupled receptors. Plays a role in NEDD4-mediated ubiquitination and endocytosis af activated ADRB2 and subsequent ADRB2 degradation. May recruit NEDD4 to ADRB2. Alternatively, may function as adapter protein that does not play a major role in recruiting NEDD4 to ADRB2, but rather plays a role in a targeting ADRB2 to endosomes. In Rattus norvegicus (Rat), this protein is Arrestin domain-containing protein 3 (Arrdc3).